Consider the following 219-residue polypeptide: Ribose-5-phosphate isomerase A (219 aa).

Residues 28–31, 81–84, and 94–97 contribute to the substrate site; these read TGST, DGAD, and KGGG. Catalysis depends on E103, which acts as the Proton acceptor. Position 121 (K121) interacts with substrate.

The protein belongs to the ribose 5-phosphate isomerase family. In terms of assembly, homodimer.

It carries out the reaction aldehydo-D-ribose 5-phosphate = D-ribulose 5-phosphate. Its pathway is carbohydrate degradation; pentose phosphate pathway; D-ribose 5-phosphate from D-ribulose 5-phosphate (non-oxidative stage): step 1/1. Catalyzes the reversible conversion of ribose-5-phosphate to ribulose 5-phosphate. The chain is Ribose-5-phosphate isomerase A from Shigella boydii serotype 18 (strain CDC 3083-94 / BS512).